Consider the following 200-residue polypeptide: Recombination protein RecR (200 aa).

The C4-type zinc finger occupies 58–75 (CSTCFCLKNLPESNCEFC). Residues 82-177 (STLCIVATPK…SISRLALGLP (96 aa)) form the Toprim domain.

Belongs to the RecR family.

May play a role in DNA repair. It seems to be involved in an RecBC-independent recombinational process of DNA repair. It may act with RecF and RecO. The protein is Recombination protein RecR of Chlamydia caviae (strain ATCC VR-813 / DSM 19441 / 03DC25 / GPIC) (Chlamydophila caviae).